We begin with the raw amino-acid sequence, 78 residues long: DNA-directed RNA polymerase subunit Rpo5 (78 aa).

This sequence belongs to the archaeal Rpo5/eukaryotic RPB5 RNA polymerase subunit family. As to quaternary structure, part of the RNA polymerase complex.

The protein resides in the cytoplasm. The enzyme catalyses RNA(n) + a ribonucleoside 5'-triphosphate = RNA(n+1) + diphosphate. DNA-dependent RNA polymerase (RNAP) catalyzes the transcription of DNA into RNA using the four ribonucleoside triphosphates as substrates. The polypeptide is DNA-directed RNA polymerase subunit Rpo5 (Methanococcus maripaludis (strain C6 / ATCC BAA-1332)).